The chain runs to 359 residues: Putative nucleotidyltransferase MAB21L1 (359 aa).

A ribonucleoside 5'-triphosphate contacts are provided by residues 23-24 (RK) and 63-66 (YEGL). Residues Glu-73 and Glu-75 each contribute to the Mg(2+) site. A ribonucleoside 5'-triphosphate is bound by residues Lys-248 and 252–255 (SLLK).

Belongs to the mab-21 family. In terms of assembly, monomer. Homodecamer; composed of 2 back to back homopentamers. The protein may exist as monomer in solution and oiligomerizes upon ligand binding.

It localises to the nucleus. Putative nucleotidyltransferase required for several aspects of embryonic development including normal development of the eye. It is unclear whether it displays nucleotidyltransferase activity in vivo. Binds single-stranded RNA (ssRNA). This is Putative nucleotidyltransferase MAB21L1 (mab21l1) from Xenopus tropicalis (Western clawed frog).